Here is a 56-residue protein sequence, read N- to C-terminus: Large ribosomal subunit protein bL32 (56 aa).

A disordered region spans residues 1–28 (MAVQQNRKTRSKRGMRRSHDALTTAALS). Over residues 7–16 (RKTRSKRGMR) the composition is skewed to basic residues.

It belongs to the bacterial ribosomal protein bL32 family.

The polypeptide is Large ribosomal subunit protein bL32 (Vibrio vulnificus (strain CMCP6)).